Reading from the N-terminus, the 500-residue chain is NAD(P)H-quinone oxidoreductase chain 4, chloroplastic (500 aa).

14 helical membrane-spanning segments follow: residues 4–24 (FPWLTIFVVLPISGGSLIFLF), 31–51 (VIKWYTIFICIFELLLMTYAF), 84–104 (GFSLGPILLTGFITTLATLAA), 111–129 (SRLFHFLMLAMYSGQIGLF), 134–154 (LLLFFIMWELELIPVYLLLSM), 167–187 (FILYTAGGSVFLLMGALGIAL), 208–228 (ALEIFFYIGFLIAFAVKSPII), 242–262 (HYSTCMLLAGILLKMGAYGLV), 272–292 (AHSIFSPWLIIVGVMQIIYAA), 305–325 (IAYSSVSHMGFIIIGICSISD), 330–350 (GAILQIISHGFIGAALFFLAG), 386–406 (LALPGMSGFFAELIVFFGIIT), 416–436 (ILITFVMAVGMILTPIYLLSM), and 463–483 (FVSISILLPVIGIGFYPDFVF).

Belongs to the complex I subunit 4 family.

The protein localises to the plastid. The protein resides in the chloroplast thylakoid membrane. It catalyses the reaction a plastoquinone + NADH + (n+1) H(+)(in) = a plastoquinol + NAD(+) + n H(+)(out). The enzyme catalyses a plastoquinone + NADPH + (n+1) H(+)(in) = a plastoquinol + NADP(+) + n H(+)(out). The polypeptide is NAD(P)H-quinone oxidoreductase chain 4, chloroplastic (Manihot esculenta (Cassava)).